A 335-amino-acid polypeptide reads, in one-letter code: Phosphate acyltransferase (335 aa).

It belongs to the PlsX family. Homodimer. Probably interacts with PlsY.

The protein resides in the cytoplasm. The enzyme catalyses a fatty acyl-[ACP] + phosphate = an acyl phosphate + holo-[ACP]. It participates in lipid metabolism; phospholipid metabolism. Catalyzes the reversible formation of acyl-phosphate (acyl-PO(4)) from acyl-[acyl-carrier-protein] (acyl-ACP). This enzyme utilizes acyl-ACP as fatty acyl donor, but not acyl-CoA. The polypeptide is Phosphate acyltransferase (Brevibacillus brevis (strain 47 / JCM 6285 / NBRC 100599)).